The following is a 212-amino-acid chain: Major fimbrial subunit (212 aa).

A signal peptide spans 1-18 (MKKTLLGSLILLAFATNA). Cysteines 42 and 82 form a disulfide.

This sequence belongs to the fimbrial protein family.

It is found in the fimbrium. Its function is as follows. Mediates adherence to oropharyngeal epithelial cells. Helps the airway colonization process. The chain is Major fimbrial subunit (hifA) from Haemophilus influenzae.